We begin with the raw amino-acid sequence, 402 residues long: MSKNLILILNCGSSSLKFAVLDPKTGDEKLSGLAEAFNLEDARIKWKLHGEKGNADLGAGAAHSEALTFIANELLSEELKSSIGAIGHRIVHGGEQFTSSVVINDDVVKGIEHAIQFAPLHNPAHLIGIKEAFRIFPELKEKNVAVFDTAFHQTMPEEAFLYALPYKLYKEHGIRRYGAHGTSHLFITSQVAELAGKPVDQTNAIICHLGNGGSVSVVRNGKCIDTSMGLTPLEGLVMGTRSGDIDPAIVFYLYKNLGMSMEQIEDTLVKKSGLLGLTEVTSDCRYAEDNYEDASKPEAKRALDVYSYRLAKYIGAYMAILGDDHLDAIAFTGGIGENSGHVRELALNHLKLFGVKLDVERNLAARFGKSGVITADDSTFKAVVIPTNEELVIAQDTAKLAL.

N10 is a binding site for Mg(2+). K17 serves as a coordination point for ATP. R89 is a binding site for substrate. Catalysis depends on D148, which acts as the Proton donor/acceptor. ATP is bound by residues 208 to 212, 283 to 285, and 334 to 338; these read HLGNG, DCR, and GIGEN. E389 provides a ligand contact to Mg(2+).

This sequence belongs to the acetokinase family. Homodimer. Requires Mg(2+) as cofactor. It depends on Mn(2+) as a cofactor.

It localises to the cytoplasm. It catalyses the reaction acetate + ATP = acetyl phosphate + ADP. It participates in metabolic intermediate biosynthesis; acetyl-CoA biosynthesis; acetyl-CoA from acetate: step 1/2. In terms of biological role, catalyzes the formation of acetyl phosphate from acetate and ATP. Can also catalyze the reverse reaction. This Actinobacillus pleuropneumoniae serotype 7 (strain AP76) protein is Acetate kinase.